A 473-amino-acid polypeptide reads, in one-letter code: Putative amidase AmiC (473 aa).

Residues K82 and S157 each act as charge relay system in the active site. The Acyl-ester intermediate role is filled by S181.

The protein belongs to the amidase family.

It carries out the reaction a monocarboxylic acid amide + H2O = a monocarboxylate + NH4(+). The sequence is that of Putative amidase AmiC (amiC) from Mycobacterium bovis (strain ATCC BAA-935 / AF2122/97).